Consider the following 149-residue polypeptide: Large ribosomal subunit protein uL16c (149 aa).

The protein belongs to the universal ribosomal protein uL16 family. Part of the 50S ribosomal subunit.

It is found in the plastid. The protein resides in the organellar chromatophore. This Paulinella chromatophora protein is Large ribosomal subunit protein uL16c (rpl16).